A 102-amino-acid polypeptide reads, in one-letter code: Citrate lyase acyl carrier protein (102 aa).

Serine 14 is modified (O-(phosphoribosyl dephospho-coenzyme A)serine).

The protein belongs to the CitD family. In terms of assembly, oligomer with a subunit composition of (alpha,beta,gamma)6.

Its subcellular location is the cytoplasm. Functionally, covalent carrier of the coenzyme of citrate lyase. This Streptococcus pyogenes serotype M4 (strain MGAS10750) protein is Citrate lyase acyl carrier protein.